The primary structure comprises 456 residues: Endoglucanase A (456 aa).

The N-terminal stretch at 1 to 30 (MSRIRRFLATALAAATAGVGAIVTAIASAG) is a signal peptide. The interval 31–322 (PAHAYDSPFY…RAYELAMNAA (292 aa)) is catalytic. Asp113 is a catalytic residue. 2 disulfides stabilise this stretch: Cys114–Cys159 and Cys267–Cys302. The active-site Proton donor is Asp151. The interval 255 to 280 (SRNGNGPLGSEWCDPPGRATGTWSTT) is disordered. Residue Asp300 is the Nucleophile of the active site. Residues 321-358 (AAPPTYSPSPTPSTPSPSPSQSDPGSPSPSPSQPPAGR) form a disordered region. Residues 323–355 (PPTYSPSPTPSTPSPSPSQSDPGSPSPSPSQPP) form a linker ('hinge') (Pro-Ser box) region. Over residues 325-338 (TYSPSPTPSTPSPS) the composition is skewed to pro residues. The 104-residue stretch at 353-456 (QPPAGRACEA…LSSSITCSAS (104 aa)) folds into the CBM2 domain. An intrachain disulfide couples Cys360 to Cys453.

This sequence belongs to the glycosyl hydrolase 6 (cellulase B) family.

It carries out the reaction Endohydrolysis of (1-&gt;4)-beta-D-glucosidic linkages in cellulose, lichenin and cereal beta-D-glucans.. The sequence is that of Endoglucanase A (celA) from Thermobispora bispora (Microbispora bispora).